A 366-amino-acid chain; its full sequence is Glutamate 5-kinase (366 aa).

Lys17 serves as a coordination point for ATP. Residues Ser57, Asp144, and Asn156 each contribute to the substrate site. ATP contacts are provided by residues 176-177 (SD) and 216-222 (TGGMASK). The PUA domain occupies 278–352 (RGALVLDDGA…GRSTTELPDT (75 aa)).

It belongs to the glutamate 5-kinase family.

It is found in the cytoplasm. It catalyses the reaction L-glutamate + ATP = L-glutamyl 5-phosphate + ADP. The protein operates within amino-acid biosynthesis; L-proline biosynthesis; L-glutamate 5-semialdehyde from L-glutamate: step 1/2. In terms of biological role, catalyzes the transfer of a phosphate group to glutamate to form L-glutamate 5-phosphate. This Nocardia farcinica (strain IFM 10152) protein is Glutamate 5-kinase.